A 105-amino-acid chain; its full sequence is Small ribosomal subunit protein uS10 (105 aa).

Belongs to the universal ribosomal protein uS10 family. Part of the 30S ribosomal subunit.

In terms of biological role, involved in the binding of tRNA to the ribosomes. The protein is Small ribosomal subunit protein uS10 of Rickettsia massiliae (strain Mtu5).